The primary structure comprises 123 residues: Small ribosomal subunit protein uS12c (123 aa).

This sequence belongs to the universal ribosomal protein uS12 family. Part of the 30S ribosomal subunit.

Its subcellular location is the plastid. It localises to the chloroplast. Its function is as follows. With S4 and S5 plays an important role in translational accuracy. Located at the interface of the 30S and 50S subunits. In Chara vulgaris (Common stonewort), this protein is Small ribosomal subunit protein uS12c (rps12).